We begin with the raw amino-acid sequence, 129 residues long: MAKEAVRVRRRERKNISSGVAHVNSTFNNTMITITDAQGNAIAWSSAGAKGFKGSRKSTPFAAQIAAEDCAKKAQEHGMKSLEVEVCGPGSGRESALRALQAAGFMITSIRDVTPIPHNGCRPRKKRRV.

This sequence belongs to the universal ribosomal protein uS11 family. In terms of assembly, part of the 30S ribosomal subunit. Interacts with proteins S7 and S18. Binds to IF-3.

In terms of biological role, located on the platform of the 30S subunit, it bridges several disparate RNA helices of the 16S rRNA. Forms part of the Shine-Dalgarno cleft in the 70S ribosome. The sequence is that of Small ribosomal subunit protein uS11 from Rhizobium etli (strain CIAT 652).